The chain runs to 503 residues: MQALPLGLQLALLVAAGAGARVSAPRSLAWGPGLQAAAVLPVRYFFLQSVDSDGRNFTSSPPGQTQFKVVVKSLSPKELVRIYVPKPLDRNDGTFLVRYRMHETAHKGLKIEILHGSEHVAHSPYILKGPVYHEYCDCPEDDPQVWQETLSCPASEPQIEQDFVSFPSINLQQMLKEVPTRFGDERGAVVHYTILNNHIYRRSLGKYTDFKMFSDEILLSLARKVTLPDLEFYINLGDWPLEHRKVNDTPGPIPIISWCGSLDSRDIILPTYDVTHSTLEAMRGVTNDLLSVQGNTGPSWINKTEKAFFRGRDSREERLQLVLLSKENPQLLDAGITGYFFFQEKEKELGKAKLMGFFDFFKYKYQVNVDGTVAAYRYPYLMLGDSLVLKQESPYYEHFYVALKPWKHYVPIKRNLGDLLEKVKWAKENDEEAKKIAKEGQLTARDLLQPPRLYCYYYRVLQKYAERQASKPMIRDGMELVPQPDDGTSICQCHRRRPEREEL.

Positions 1 to 19 are cleaved as a signal peptide; that stretch reads MQALPLGLQLALLVAAGAG. The Filamin repeat unit spans residues 19–129; that stretch reads GARVSAPRSL…VAHSPYILKG (111 aa). N-linked (GlcNAc...) asparagine glycans are attached at residues Asn-56 and Asn-302. Residues 500–503 carry the Prevents secretion from ER motif; that stretch reads REEL.

Belongs to the KDELC family.

Its subcellular location is the endoplasmic reticulum lumen. The catalysed reaction is L-seryl-[EGF-like domain protein] + UDP-alpha-D-glucose = 3-O-(beta-D-glucosyl)-L-seryl-[EGF-like domain protein] + UDP + H(+). It carries out the reaction L-seryl-[EGF-like domain protein] + UDP-alpha-D-xylose = 3-O-(beta-D-xylosyl)-L-seryl-[EGF-like domain protein] + UDP + H(+). It functions in the pathway protein modification; protein glycosylation. In terms of biological role, protein glucosyltransferase that catalyzes the transfer of glucose from UDP-glucose to a serine residue within the consensus sequence peptide C-X-N-T-X-G-S-F-X-C. Can also catalyze the transfer of xylose from UDP-xylose but less efficiently. Specifically targets extracellular EGF repeats of proteins such as NOTCH1, NOTCH3, FBN1, FBN2 and LTBP1. May regulate the transport of NOTCH1 and NOTCH3 to the plasma membrane and thereby the Notch signaling pathway. The sequence is that of Protein O-glucosyltransferase 3 (Poglut3) from Mus musculus (Mouse).